The primary structure comprises 83 residues: MSGNTGERPFADIITSIRYWVIHSITIPSLFIAGWLFVSTGLAYDVFGSPRPNEYFTESRQEIPLITGRFNSLEQVDEFTRSF.

Residues 21–35 (VIHSITIPSLFIAGW) traverse the membrane as a helical segment. Histidine 23 lines the heme pocket.

It belongs to the PsbE/PsbF family. Heterodimer of an alpha subunit and a beta subunit. PSII is composed of 1 copy each of membrane proteins PsbA, PsbB, PsbC, PsbD, PsbE, PsbF, PsbH, PsbI, PsbJ, PsbK, PsbL, PsbM, PsbT, PsbX, PsbY, PsbZ, Psb30/Ycf12, at least 3 peripheral proteins of the oxygen-evolving complex and a large number of cofactors. It forms dimeric complexes. The cofactor is heme b.

The protein localises to the plastid. It localises to the chloroplast thylakoid membrane. Its function is as follows. This b-type cytochrome is tightly associated with the reaction center of photosystem II (PSII). PSII is a light-driven water:plastoquinone oxidoreductase that uses light energy to abstract electrons from H(2)O, generating O(2) and a proton gradient subsequently used for ATP formation. It consists of a core antenna complex that captures photons, and an electron transfer chain that converts photonic excitation into a charge separation. This chain is Cytochrome b559 subunit alpha, found in Psilotum nudum (Whisk fern).